Here is a 288-residue protein sequence, read N- to C-terminus: Protein-S-isoprenylcysteine O-methyltransferase (288 aa).

The helical transmembrane segment at 13–29 (SIVSFTLGASVISLPLL) threads the bilayer. The Lumenal portion of the chain corresponds to 30-45 (TSSFTEQTLLAAAPGR). The chain crosses the membrane as a helical span at residues 46 to 63 (IALVFFIAALNGLLLLLY). The Cytoplasmic segment spans residues 64-73 (KAQLYQVAIR). A helical membrane pass occupies residues 74–91 (ASFLGFAFGCGLLLSITQ). Over 92 to 96 (SPWKP) the chain is Lumenal. Residues 97-116 (FGWYVCSLSFFHYSEYLVTA) traverse the membrane as a helical segment. Topologically, residues 117–135 (MNNPRSLSIDSFLLNHSLE) are cytoplasmic. The helical transmembrane segment at 136-153 (YTLAALSSWVEFTIETTI) threads the bilayer. Residues 154–158 (YPDLK) lie on the Lumenal side of the membrane. The helical transmembrane segment at 159-178 (QITWLSVIGLIMVLFGEVLR) threads the bilayer. At 179–216 (KCAMLTAGSNFNHIVQNEKSDSHTLVTSGVYSWFRHPS) the chain is on the cytoplasmic side. S-adenosyl-L-methionine is bound by residues Q194, 201 to 204 (HTLV), Y209, and 214 to 217 (HPSY). The chain crosses the membrane as a helical span at residues 217–232 (YVGWFYWSIGTQVLLC). N233 is a topological domain (lumenal). Residues 234–248 (PLCLVGYTLASWRFF) form a helical membrane-spanning segment. Topologically, residues 249 to 288 (SERIEEEEFSLIHFFGENYLEYKKKVPTGLPFIKGVKMEP) are cytoplasmic. Residue R251 coordinates substrate. E255 lines the S-adenosyl-L-methionine pocket.

It belongs to the class VI-like SAM-binding methyltransferase superfamily. Isoprenylcysteine carboxyl methyltransferase family.

The protein resides in the endoplasmic reticulum membrane. The catalysed reaction is [protein]-C-terminal S-[(2E,6E)-farnesyl]-L-cysteine + S-adenosyl-L-methionine = [protein]-C-terminal S-[(2E,6E)-farnesyl]-L-cysteine methyl ester + S-adenosyl-L-homocysteine. Catalyzes the post-translational methylation of isoprenylated C-terminal cysteine residues. The sequence is that of Protein-S-isoprenylcysteine O-methyltransferase (icmt) from Xenopus laevis (African clawed frog).